The following is a 1863-amino-acid chain: MDLSAVRVEEVQNVINAMQKILECPICLELIKEPVSTKCDHIFCKFCMLKLLNQKKGPSQCPLCKNDITKRSLQESTRFSQLVEELLKIICAFQLDTGLQYANSYNFAKKENNSPEHLKDEVSIIQSMGYRNRAKRLLQSEPENPSLQETSPSVQLSNLGTVRTLRTKQRIQPQKKSVYIELGSDSSEDTVNKATYCSVGDQELLQITPQGTSDEISLDSAKKAACEFSETDVTNTEHHQPSNNDLNTTEKRATERHPEKYQGSSVSNLHVEPCGTNTHASSLQHENSSLLLTKDRMNVEKAEFCNKSKQPGLARSQHNRWAGSKETCNDRQTPSTEKKVDLNADPLCERKEWNKQKLPCSENPRDTEDVPWITLNSSIQKVNEWFSRSDELLGSDDSHDGRSESNAKVADVLDVLNEVDEYSGSSEKIDLLASDPHEALICKSERVHSKSVESNIEDKIFGKTYRRKASLPNLSHVTENLIIGAFVTEPQIIQERPLTNKLKRKRRATSGLHPEDFIKKADLAVQKTPEMINQGTNQMEQNGQVMNITNSGHENKTKGDSIQNEKNPNPIESLEKESAFKTKAEPISSSISNMELELNIHNSKAPKKNRLRRKSSTRHIHALELVVSRNLSPPNCTELQIDSCSSSEEIKKKKYNQMPVRHSRNLQLMEDKEPATGAKKSNKPNEQTSKRHDSDTFPELKLTNAPGSFTNCSNTSELKEFVNPSLPREEKEEKLGTVKVSNNAKDPKDLMLSGERVLQTERSVESSSISLVPGTDYGTQESISLLEVSTLGKAKTEPNKCVSQCAAFENPKELIHGCFKDTRNDTEGFKYPLGHEVNHSQETSIEMEESELDTQYLQNTFKVSKRQSFALFSNPGNPEEECATFSAHSRSLKKQSPKVTFECEQKEENQGKNESNIKPVQTANITAGFPVVCQKDKPVDYAKCSIKGGSRFCLSSQFRGNETGLITPNKHGLSQNPYHIPPLFPIKSFVKTKCKKNLLEENSEEHSMSPEREMGNENIPSTVSIISRNNIRENVFKEASSSNINEVGSSTNEVGSSINEVGSSDENIQAELGRSRGPKLNAMLRLGVLQPEVYKQSFPGSNGKHPEIKKQEYEEVLQTVNTDFSPCLISDNLEQPMRSSHASQVCSETPNDLLDDGEIKEDTSFAENDIKESSAVFSKSVQRGELSRSPSPFTHTHLAQGYRRGAKKLESSEENLSSEDEELPCFQHLLFGKVSNIPSQSTRHSTVATECLSKNTEENLLSLKNSLNDYSNQVILVKASQEHHLSEETKCSASLFSSQCSELEDLTANTNTQDRFFIGSSKQMRHQSESQGVGLSDKELVSDDEERGTDLEENNQEEQGVDSNLGEAASGYESETSVSEDCSGLSSQSDILTTQQRDTMQDNLIKLQQEMAELEAVLEQHGSQPSNSYPSIISDSSALEDLRNPEQSTSEKAVLTSQKSSEYPISQNPEGLSADKFEVSADSSTNKNKEPGVERSSPSKCPSLDDRWYMHSCSGSLQNGNYPSQEELIKVVDVEKQQLEESGPHDLTEPSYLPRQDLEGTPYLESGISLFSDDPESDASEDRAPESAHVGSIPSSTSALKVPQLKVAESAQSPAAAQTTNTAGYNAMEESVSREKPELTASTERVNKRMSMVVSGLTPEEFMLVYKFARKHHITLTNLITEETTHVVMKTDAEFVCERTLKYFLGIAGGKWVVSYFWVTQSIKERKMLNEHDFEVRGDVVNGRNHQGPKRARESQDRKIFRGLEICCYGPFTNMPTDQLEWIVQLCGASVVKELSSFTLGTGVHPIVVVQPDAWTEDNGFHAIGQMCEAPVVTREWVLDSVALYQCQELDTYLIPQIPHSHY.

Met-1 carries the N-acetylmethionine modification. An RING-type zinc finger spans residues 24–65 (CPICLELIKEPVSTKCDHIFCKFCMLKLLNQKKGPSQCPLCK). Residue Lys-109 forms a Glycyl lysine isopeptide (Lys-Gly) (interchain with G-Cter in SUMO2) linkage. The residue at position 114 (Ser-114) is a Phosphoserine. Positions 231 to 267 (TDVTNTEHHQPSNNDLNTTEKRATERHPEKYQGSSVS) are disordered. Residues 248 to 260 (TTEKRATERHPEK) show a composition bias toward basic and acidic residues. A Glycyl lysine isopeptide (Lys-Gly) (interchain with G-Cter in SUMO2) cross-link involves residue Lys-301. Positions 306 to 338 (NKSKQPGLARSQHNRWAGSKETCNDRQTPSTEK) are disordered. Residue Lys-339 forms a Glycyl lysine isopeptide (Lys-Gly) (interchain with G-Cter in SUMO2) linkage. 4 positions are modified to phosphoserine: Ser-395, Ser-398, Ser-423, and Ser-434. Glycyl lysine isopeptide (Lys-Gly) (interchain with G-Cter in SUMO2) cross-links involve residues Lys-443, Lys-459, and Lys-519. Residue Ser-551 is modified to Phosphoserine. Residues Lys-583 and Lys-654 each participate in a glycyl lysine isopeptide (Lys-Gly) (interchain with G-Cter in SUMO2) cross-link. Residues 650 to 735 (IKKKKYNQMP…LPREEKEEKL (86 aa)) form a disordered region. A phosphoserine mark is found at Ser-694, Ser-708, and Ser-725. Residues 705-716 (APGSFTNCSNTS) are compositionally biased toward polar residues. Glycyl lysine isopeptide (Lys-Gly) (interchain with G-Cter in SUMO2) cross-links involve residues Lys-734 and Lys-739. Residues Ser-753 and Ser-840 each carry the phosphoserine modification. Glycyl lysine isopeptide (Lys-Gly) (interchain with G-Cter in SUMO2) cross-links involve residues Lys-918 and Lys-987. Position 988 is a phosphoserine; by CHEK2 (Ser-988). The residue at position 1009 (Ser-1009) is a Phosphoserine. Residues 1045–1066 (NEVGSSTNEVGSSINEVGSSDE) form a disordered region. Lys-1079 is covalently cross-linked (Glycyl lysine isopeptide (Lys-Gly) (interchain with G-Cter in SUMO2)). 11 positions are modified to phosphoserine: Ser-1143, Ser-1189, Ser-1191, Ser-1211, Ser-1217, Ser-1218, Ser-1280, Ser-1328, Ser-1336, Ser-1342, and Ser-1387. Residues 1181-1216 (VQRGELSRSPSPFTHTHLAQGYRRGAKKLESSEENL) form a disordered region. The interval 1322–1394 (KQMRHQSESQ…LSSQSDILTT (73 aa)) is disordered. Residues 1342-1360 (SDDEERGTDLEENNQEEQG) show a composition bias toward acidic residues. The segment covering 1373–1394 (ESETSVSEDCSGLSSQSDILTT) has biased composition (polar residues). Thr-1394 is modified (phosphothreonine). The segment at 1397–1424 (RDTMQDNLIKLQQEMAELEAVLEQHGSQ) is interaction with PALB2. Phosphoserine is present on residues Ser-1423, Ser-1457, Ser-1524, and Ser-1542. Positions 1440–1504 (EDLRNPEQST…RSSPSKCPSL (65 aa)) are disordered. Residues 1445–1470 (PEQSTSEKAVLTSQKSSEYPISQNPE) show a composition bias toward polar residues. Disordered regions lie at residues 1540-1597 (EESG…PSST) and 1610-1642 (SAQS…LTAS). The span at 1610–1624 (SAQSPAAAQTTNTAG) shows a compositional bias: polar residues. 2 BRCT domains span residues 1642–1736 (STER…DFEV) and 1756–1855 (QDRK…TYLI).

Heterodimer with BARD1. Part of the BRCA1-associated genome surveillance complex (BASC), which contains BRCA1, MSH2, MSH6, MLH1, ATM, BLM, PMS2 and the MRE11-RAD50-NBN protein (MRN) complex. This association could be a dynamic process changing throughout the cell cycle and within subnuclear domains. Component of the BRCA1-A complex, at least composed of BRCA1, BARD1, UIMC1/RAP80, ABRAXAS1, BRCC3/BRCC36, BABAM2 and BABAM1/NBA1. Interacts (via the BRCT domains) with ABRAXAS1 (phosphorylated form); this is important for recruitment to sites of DNA damage. Can form a heterotetramer with two molecules of ABRAXAS1 (phosphorylated form). Component of the BRCA1-RBBP8 complex. Interacts (via the BRCT domains) with RBBP8 ('Ser-327' phosphorylated form); the interaction ubiquitinates RBBP8, regulates CHEK1 activation, and involves RBBP8 in BRCA1-dependent G2/M checkpoint control on DNA damage. Associates with RNA polymerase II holoenzyme. Interacts with SMC1A, NELFB, DCLRE1C, CLSPN. CHEK1, CHEK2, BAP1, BRCC3, UBXN1 and PCLAF. Interacts (via BRCT domains) with BRIP1 (phosphorylated form). Interacts with FANCD2 (ubiquitinated form). Interacts with H2AX (phosphorylated on 'Ser-140'). Interacts (via the BRCT domains) with ACACA (phosphorylated form); the interaction prevents dephosphorylation of ACACA. Part of a BRCA complex containing BRCA1, BRCA2 and PALB2. Interacts directly with PALB2; the interaction is essential for its function in HRR. Interacts directly with BRCA2; the interaction occurs only in the presence of PALB2 which serves as the bridging protein. Interacts (via the BRCT domains) with LMO4; the interaction represses the transcriptional activity of BRCA1. Interacts (via the BRCT domains) with CCAR2 (via N-terminus); the interaction represses the transcriptional activator activity of BRCA1. Interacts with EXD2. Interacts (via C-terminus) with DHX9; this interaction is direct and links BRCA1 to the RNA polymerase II holoenzyme. Interacts with DNA helicase ZGRF1; the interaction is increased following DNA damage induction. In terms of processing, phosphorylated in response to IR, UV, and various stimuli that cause checkpoint activation, probably by ATM or ATR. Phosphorylation at Ser-988 by CHEK2 regulates mitotic spindle assembly. Phosphorylation by AURKA regulates centrosomal microtubule nucleation. Post-translationally, autoubiquitinated, undergoes 'Lys-6'-linked polyubiquitination. 'Lys-6'-linked polyubiquitination does not promote degradation.

It is found in the nucleus. The protein resides in the chromosome. It localises to the cytoplasm. It catalyses the reaction S-ubiquitinyl-[E2 ubiquitin-conjugating enzyme]-L-cysteine + [acceptor protein]-L-lysine = [E2 ubiquitin-conjugating enzyme]-L-cysteine + N(6)-ubiquitinyl-[acceptor protein]-L-lysine.. Its pathway is protein modification; protein ubiquitination. In terms of biological role, E3 ubiquitin-protein ligase that specifically mediates the formation of 'Lys-6'-linked polyubiquitin chains and plays a central role in DNA repair by facilitating cellular responses to DNA damage. It is unclear whether it also mediates the formation of other types of polyubiquitin chains. The BRCA1-BARD1 heterodimer coordinates a diverse range of cellular pathways such as DNA damage repair, ubiquitination and transcriptional regulation to maintain genomic stability. Regulates centrosomal microtubule nucleation. Required for appropriate cell cycle arrests after ionizing irradiation in both the S-phase and the G2 phase of the cell cycle. Required for FANCD2 targeting to sites of DNA damage. Inhibits lipid synthesis by binding to inactive phosphorylated ACACA and preventing its dephosphorylation. Contributes to homologous recombination repair (HRR) via its direct interaction with PALB2, fine-tunes recombinational repair partly through its modulatory role in the PALB2-dependent loading of BRCA2-RAD51 repair machinery at DNA breaks. Component of the BRCA1-RBBP8 complex which regulates CHEK1 activation and controls cell cycle G2/M checkpoints on DNA damage via BRCA1-mediated ubiquitination of RBBP8. Acts as a transcriptional activator. The polypeptide is Breast cancer type 1 susceptibility protein homolog (BRCA1) (Pongo pygmaeus (Bornean orangutan)).